The sequence spans 125 residues: Large ribosomal subunit protein bL12 (125 aa).

It belongs to the bacterial ribosomal protein bL12 family. Homodimer. Part of the ribosomal stalk of the 50S ribosomal subunit. Forms a multimeric L10(L12)X complex, where L10 forms an elongated spine to which 2 to 4 L12 dimers bind in a sequential fashion. Binds GTP-bound translation factors.

In terms of biological role, forms part of the ribosomal stalk which helps the ribosome interact with GTP-bound translation factors. Is thus essential for accurate translation. In Francisella tularensis subsp. tularensis (strain SCHU S4 / Schu 4), this protein is Large ribosomal subunit protein bL12.